Reading from the N-terminus, the 254-residue chain is Phosphoribosylaminoimidazole-succinocarboxamide synthase (254 aa).

It belongs to the SAICAR synthetase family.

The enzyme catalyses 5-amino-1-(5-phospho-D-ribosyl)imidazole-4-carboxylate + L-aspartate + ATP = (2S)-2-[5-amino-1-(5-phospho-beta-D-ribosyl)imidazole-4-carboxamido]succinate + ADP + phosphate + 2 H(+). It participates in purine metabolism; IMP biosynthesis via de novo pathway; 5-amino-1-(5-phospho-D-ribosyl)imidazole-4-carboxamide from 5-amino-1-(5-phospho-D-ribosyl)imidazole-4-carboxylate: step 1/2. In Acidiphilium cryptum (strain JF-5), this protein is Phosphoribosylaminoimidazole-succinocarboxamide synthase.